A 381-amino-acid chain; its full sequence is Homoserine O-succinyltransferase (381 aa).

The AB hydrolase-1 domain maps to 45-360 (NAVLVCHALN…PHGHDAFLLD (316 aa)). Ser151 functions as the Nucleophile in the catalytic mechanism. Arg221 contributes to the substrate binding site. Catalysis depends on residues Asp321 and His354. Asp355 contributes to the substrate binding site.

It belongs to the AB hydrolase superfamily. MetX family. Homodimer.

It is found in the cytoplasm. The enzyme catalyses L-homoserine + succinyl-CoA = O-succinyl-L-homoserine + CoA. The protein operates within amino-acid biosynthesis; L-methionine biosynthesis via de novo pathway; O-succinyl-L-homoserine from L-homoserine: step 1/1. Its function is as follows. Transfers a succinyl group from succinyl-CoA to L-homoserine, forming succinyl-L-homoserine. This chain is Homoserine O-succinyltransferase, found in Paraburkholderia phymatum (strain DSM 17167 / CIP 108236 / LMG 21445 / STM815) (Burkholderia phymatum).